The sequence spans 934 residues: Protein translocase subunit SecA (934 aa).

Residues Gln87, 105–109 (GEGKT), and Asp515 contribute to the ATP site. 4 residues coordinate Zn(2+): Cys918, Cys920, Cys929, and His930.

Belongs to the SecA family. As to quaternary structure, monomer and homodimer. Part of the essential Sec protein translocation apparatus which comprises SecA, SecYEG and auxiliary proteins SecDF-YajC and YidC. Zn(2+) is required as a cofactor.

It is found in the cell inner membrane. The protein localises to the cytoplasm. It carries out the reaction ATP + H2O + cellular proteinSide 1 = ADP + phosphate + cellular proteinSide 2.. In terms of biological role, part of the Sec protein translocase complex. Interacts with the SecYEG preprotein conducting channel. Has a central role in coupling the hydrolysis of ATP to the transfer of proteins into and across the cell membrane, serving both as a receptor for the preprotein-SecB complex and as an ATP-driven molecular motor driving the stepwise translocation of polypeptide chains across the membrane. This chain is Protein translocase subunit SecA, found in Ralstonia pickettii (strain 12J).